A 51-amino-acid polypeptide reads, in one-letter code: Sperm protamine P1 (51 aa).

Intrachain disulfides connect C7/C15 and C40/C48.

Belongs to the protamine P1 family. Cross-linked by interchain disulfide bonds around the DNA-helix. Phosphorylated by SRPK1. In terms of tissue distribution, testis.

The protein localises to the nucleus. It localises to the chromosome. Protamines substitute for histones in the chromatin of sperm during the haploid phase of spermatogenesis. They compact sperm DNA into a highly condensed, stable and inactive complex. The protein is Sperm protamine P1 (PRM1) of Bos taurus (Bovine).